The primary structure comprises 423 residues: Kynurenine--oxoglutarate transaminase 1 (423 aa).

G36 lines the substrate pocket. K82 carries the N6-succinyllysine modification. A substrate-binding site is contributed by N185. Position 247 is an N6-(pyridoxal phosphate)lysine (K247). Residue R398 coordinates substrate.

It belongs to the class-I pyridoxal-phosphate-dependent aminotransferase family. Homodimer. It depends on pyridoxal 5'-phosphate as a cofactor. As to expression, detected in kidney.

The protein localises to the cytoplasm. It localises to the cytosol. The protein resides in the mitochondrion matrix. It carries out the reaction L-kynurenine + 2-oxoglutarate = kynurenate + L-glutamate + H2O. It catalyses the reaction 3-phenylpyruvate + L-glutamine = 2-oxoglutaramate + L-phenylalanine. The enzyme catalyses an S-substituted L-cysteine + H2O = a thiol + pyruvate + NH4(+). Its pathway is amino-acid degradation; L-kynurenine degradation; kynurenate from L-kynurenine: step 1/2. Its activity is regulated as follows. Inhibited by aminooxyacetate (in vitro). In terms of biological role, catalyzes the irreversible transamination of the L-tryptophan metabolite L-kynurenine to form kynurenic acid (KA), an intermediate in the tryptophan catabolic pathway which is also a broad spectrum antagonist of the three ionotropic excitatory amino acid receptors among others. Metabolizes the cysteine conjugates of certain halogenated alkenes and alkanes to form reactive metabolites. Catalyzes the beta-elimination of S-conjugates and Se-conjugates of L-(seleno)cysteine, resulting in the cleavage of the C-S or C-Se bond. The chain is Kynurenine--oxoglutarate transaminase 1 from Rattus norvegicus (Rat).